A 267-amino-acid polypeptide reads, in one-letter code: Putative ABC transporter permease protein MJ0413 (267 aa).

7 helical membrane passes run 18 to 38 (VLKISLPALAVVIWELLAIYI), 48 to 68 (EAVINVLIHPFQGILGTGSLI), 78 to 98 (VISGFLLASAVAIPLGILMGY), 115 to 135 (PIPPLAWVPLSLAWFGLGEMS), 136 to 156 (MIFIIFIGAFFPILINTISGV), 188 to 208 (PSILTGLRVGAGIAWMCVVAA), and 228 to 248 (LSRMDVVIACMIIIGLIGLVL). Residues 71–252 (TIISIKRVIS…LIGLVLDRGL (182 aa)) form the ABC transmembrane type-1 domain.

Belongs to the binding-protein-dependent transport system permease family. CysTW subfamily.

It is found in the cell membrane. Probably part of a binding-protein-dependent transport system. Probably responsible for the translocation of the substrate across the membrane. The protein is Putative ABC transporter permease protein MJ0413 of Methanocaldococcus jannaschii (strain ATCC 43067 / DSM 2661 / JAL-1 / JCM 10045 / NBRC 100440) (Methanococcus jannaschii).